The sequence spans 354 residues: Selenide, water dikinase (354 aa).

Residue Cys23 is part of the active site. ATP is bound by residues Lys26 and 54–56; that span reads TSD. Asp57 provides a ligand contact to Mg(2+). Residues Asp74, Asp97, and 145-147 contribute to the ATP site; that span reads GHS. Position 97 (Asp97) interacts with Mg(2+). A Mg(2+)-binding site is contributed by Asp233.

It belongs to the selenophosphate synthase 1 family. Class I subfamily. As to quaternary structure, homodimer. Mg(2+) serves as cofactor.

The enzyme catalyses hydrogenselenide + ATP + H2O = selenophosphate + AMP + phosphate + 2 H(+). Synthesizes selenophosphate from selenide and ATP. The protein is Selenide, water dikinase of Burkholderia orbicola (strain MC0-3).